A 151-amino-acid polypeptide reads, in one-letter code: Metalloproteinase inhibitor 3 (151 aa).

Residues 1–108 form the NTR domain; that stretch reads CNSDIVIRAK…GLNYRYHLGC (108 aa). 3 disulfide bridges follow: cysteine 1/cysteine 108, cysteine 115/cysteine 120, and cysteine 128/cysteine 149. Residues 53–54 are involved in metalloproteinase-binding; it reads ES. The tract at residues 71-151 is mediates interaction with EFEMP1; the sequence is GRVYDGKVYT…YQSKHYACIR (81 aa).

Belongs to the protease inhibitor I35 (TIMP) family. As to quaternary structure, interacts with EFEMP1.

It is found in the secreted. The protein localises to the extracellular space. The protein resides in the extracellular matrix. Its function is as follows. Complexes with metalloproteinases (such as collagenases) and irreversibly inactivates them by binding to their catalytic zinc cofactor. May form part of a tissue-specific acute response to remodeling stimuli. The protein is Metalloproteinase inhibitor 3 (TIMP3) of Oryctolagus cuniculus (Rabbit).